The sequence spans 342 residues: Methionyl-tRNA formyltransferase (342 aa).

108–111 (SLLP) serves as a coordination point for (6S)-5,6,7,8-tetrahydrofolate.

The protein belongs to the Fmt family.

The enzyme catalyses L-methionyl-tRNA(fMet) + (6R)-10-formyltetrahydrofolate = N-formyl-L-methionyl-tRNA(fMet) + (6S)-5,6,7,8-tetrahydrofolate + H(+). Functionally, attaches a formyl group to the free amino group of methionyl-tRNA(fMet). The formyl group appears to play a dual role in the initiator identity of N-formylmethionyl-tRNA by promoting its recognition by IF2 and preventing the misappropriation of this tRNA by the elongation apparatus. This is Methionyl-tRNA formyltransferase from Prochlorococcus marinus (strain MIT 9313).